A 557-amino-acid polypeptide reads, in one-letter code: Urocanate hydratase (557 aa).

A disordered region spans residues 1 to 20; the sequence is MSNPRHNEREVRSPRGDELN. Residues 52–53, glutamine 130, 176–178, glutamate 196, arginine 201, 242–243, 263–267, 273–274, and tyrosine 322 contribute to the NAD(+) site; these read GG, GMG, NA, QTSAH, and YL. The active site involves cysteine 410. Glycine 492 is an NAD(+) binding site.

This sequence belongs to the urocanase family. NAD(+) is required as a cofactor.

The protein resides in the cytoplasm. It catalyses the reaction 4-imidazolone-5-propanoate = trans-urocanate + H2O. It participates in amino-acid degradation; L-histidine degradation into L-glutamate; N-formimidoyl-L-glutamate from L-histidine: step 2/3. Functionally, catalyzes the conversion of urocanate to 4-imidazolone-5-propionate. The polypeptide is Urocanate hydratase (Brucella abortus (strain S19)).